The sequence spans 292 residues: Undecaprenyl-diphosphatase (292 aa).

The next 7 membrane-spanning stretches (helical) occupy residues 1 to 21, 46 to 66, 90 to 110, 114 to 134, 192 to 212, 225 to 245, and 253 to 273; these read MSLV…FLPV, FVTI…RADI, LGWY…LLEH, ALGN…LLAA, FLLS…STVP, VVGT…LLAW, and VFVV…LSGV.

It belongs to the UppP family.

It localises to the cell inner membrane. The catalysed reaction is di-trans,octa-cis-undecaprenyl diphosphate + H2O = di-trans,octa-cis-undecaprenyl phosphate + phosphate + H(+). Functionally, catalyzes the dephosphorylation of undecaprenyl diphosphate (UPP). Confers resistance to bacitracin. In Anaeromyxobacter sp. (strain K), this protein is Undecaprenyl-diphosphatase.